The following is a 205-amino-acid chain: Methylthioribulose-1-phosphate dehydratase (205 aa).

Zn(2+) contacts are provided by His96 and His98.

Belongs to the aldolase class II family. MtnB subfamily. It depends on Zn(2+) as a cofactor.

The enzyme catalyses 5-(methylsulfanyl)-D-ribulose 1-phosphate = 5-methylsulfanyl-2,3-dioxopentyl phosphate + H2O. It participates in amino-acid biosynthesis; L-methionine biosynthesis via salvage pathway; L-methionine from S-methyl-5-thio-alpha-D-ribose 1-phosphate: step 2/6. Functionally, catalyzes the dehydration of methylthioribulose-1-phosphate (MTRu-1-P) into 2,3-diketo-5-methylthiopentyl-1-phosphate (DK-MTP-1-P). In Pseudomonas aeruginosa (strain LESB58), this protein is Methylthioribulose-1-phosphate dehydratase.